The chain runs to 218 residues: tRNA (guanine-N(7)-)-methyltransferase (218 aa).

The tract at residues 1 to 26 is disordered; it reads MRLKNKPWANELVEEHPESALDRPDP. The segment covering 13-26 has biased composition (basic and acidic residues); it reads VEEHPESALDRPDP. Residues glutamate 45, glutamate 70, aspartate 97, and aspartate 119 each contribute to the S-adenosyl-L-methionine site. Aspartate 119 is an active-site residue. Lysine 123 is a substrate binding site. The interaction with RNA stretch occupies residues 125-130; that stretch reads RHEKRR. Substrate-binding positions include aspartate 155 and 195 to 198; that span reads TEYE.

The protein belongs to the class I-like SAM-binding methyltransferase superfamily. TrmB family.

The catalysed reaction is guanosine(46) in tRNA + S-adenosyl-L-methionine = N(7)-methylguanosine(46) in tRNA + S-adenosyl-L-homocysteine. Its pathway is tRNA modification; N(7)-methylguanine-tRNA biosynthesis. Its function is as follows. Catalyzes the formation of N(7)-methylguanine at position 46 (m7G46) in tRNA. The chain is tRNA (guanine-N(7)-)-methyltransferase from Lactobacillus delbrueckii subsp. bulgaricus (strain ATCC 11842 / DSM 20081 / BCRC 10696 / JCM 1002 / NBRC 13953 / NCIMB 11778 / NCTC 12712 / WDCM 00102 / Lb 14).